A 753-amino-acid polypeptide reads, in one-letter code: Neuroendocrine convertase 1 (753 aa).

A signal peptide spans 1 to 27 (MEQRGWTLQCTAFAFFCVWCALSSVKA). The propeptide occupies 28–110 (KRQFVNEWAA…QQYEKERSKR (83 aa)). Residues 129–450 (QWYLQDTRMT…FGLLNAKALV (322 aa)) form the Peptidase S8 domain. Active-site charge relay system residues include aspartate 167 and histidine 208. Intrachain disulfides connect cysteine 225–cysteine 374 and cysteine 317–cysteine 347. The active-site Charge relay system is the serine 382. N-linked (GlcNAc...) asparagine glycosylation occurs at asparagine 401. In terms of domain architecture, P/Homo B spans 460–597 (NVPEKKECVV…KLILHGTSSQ (138 aa)). An intrachain disulfide couples cysteine 467 to cysteine 494. Residues 633–651 (QKSLNGNLLVPKNSSSSNV) show a composition bias toward polar residues. Residues 633 to 663 (QKSLNGNLLVPKNSSSSNVEGRRDEQVQGTP) are disordered. The N-linked (GlcNAc...) asparagine glycan is linked to asparagine 645.

It belongs to the peptidase S8 family. Furin subfamily. Ca(2+) serves as cofactor.

The protein resides in the cytoplasmic vesicle. Its subcellular location is the secretory vesicle. The enzyme catalyses Release of protein hormones, neuropeptides and renin from their precursors, generally by hydrolysis of -Lys-Arg-|- bonds.. Involved in the processing of hormone and other protein precursors at sites comprised of pairs of basic amino acid residues. Substrates include POMC, renin, enkephalin, dynorphin, somatostatin, insulin and AGRP. This Mus cookii (Cook's mouse) protein is Neuroendocrine convertase 1 (Pcsk1).